The primary structure comprises 163 residues: MEKLGINWGLLIAQLINVVFVVWLLTTFLYRPILNMLNQRTNRIQEGLQDAERVREQLANAKRDYDAELAKARQEAASILAQAQERARAQAAEIIAQAHRDAEKIKSDTLAQAEQERQRMLGELKDRMAELVVLTAERVLNAELKANHDRLIEESLAELGKYN.

Residues Gly-9–Leu-29 form a helical membrane-spanning segment.

It belongs to the ATPase B chain family. As to quaternary structure, F-type ATPases have 2 components, F(1) - the catalytic core - and F(0) - the membrane proton channel. F(1) has five subunits: alpha(3), beta(3), gamma(1), delta(1), epsilon(1). F(0) has four main subunits: a(1), b(2) and c(10-14). The alpha and beta chains form an alternating ring which encloses part of the gamma chain. F(1) is attached to F(0) by a central stalk formed by the gamma and epsilon chains, while a peripheral stalk is formed by the delta and b chains.

The protein resides in the cell membrane. F(1)F(0) ATP synthase produces ATP from ADP in the presence of a proton or sodium gradient. F-type ATPases consist of two structural domains, F(1) containing the extramembraneous catalytic core and F(0) containing the membrane proton channel, linked together by a central stalk and a peripheral stalk. During catalysis, ATP synthesis in the catalytic domain of F(1) is coupled via a rotary mechanism of the central stalk subunits to proton translocation. In terms of biological role, component of the F(0) channel, it forms part of the peripheral stalk, linking F(1) to F(0). The protein is ATP synthase subunit b of Roseiflexus castenholzii (strain DSM 13941 / HLO8).